We begin with the raw amino-acid sequence, 69 residues long: Sperm protamine P1 (69 aa).

The interval 1–69 is disordered; that stretch reads MASYRNSRSR…RKRNNNTENK (69 aa). Composition is skewed to basic residues over residues 7-25 and 34-63; these read SRSR…RSRV and RSSR…RKRN.

This sequence belongs to the protamine P1 family. Testis.

The protein resides in the nucleus. Its subcellular location is the chromosome. Protamines substitute for histones in the chromatin of sperm during the haploid phase of spermatogenesis. They compact sperm DNA into a highly condensed, stable and inactive complex. This Perameles gunnii (Eastern barred bandicoot) protein is Sperm protamine P1 (PRM1).